A 140-amino-acid chain; its full sequence is MSSRHRGRSLALMCLYQIDLVGTDPDRAMKFDWYDKKITREEKDYAVFLVKGVVENRKAIDTLIKKYSENWELSRISVVNRCILRLSILSLQKEPFLAAPVVINEAVELTKEFETEESAQFINGLLDAFYKKEILPKEPH.

The protein belongs to the NusB family.

In terms of biological role, involved in transcription antitermination. Required for transcription of ribosomal RNA (rRNA) genes. Binds specifically to the boxA antiterminator sequence of the ribosomal RNA (rrn) operons. This Leptospira biflexa serovar Patoc (strain Patoc 1 / Ames) protein is Transcription antitermination protein NusB.